The following is a 152-amino-acid chain: Glutaredoxin-related protein 5, mitochondrial (152 aa).

The N-terminal 31 residues, 1–31, are a transit peptide targeting the mitochondrion; the sequence is MSASLSRAAAALLRWGRSAGGGGLPGAGVRA. Residues 38–141 enclose the Glutaredoxin domain; sequence AEQLDALVKK…EELKKLGIRS (104 aa). Position 55 (Lys55) interacts with glutathione. An N6-succinyllysine modification is found at Lys55. Cys63 lines the [2Fe-2S] cluster pocket. Glutathione is bound by residues 93–97, Ile105, and 118–119; these read RQGIK and CD. Ser151 is modified (phosphoserine).

This sequence belongs to the glutaredoxin family. Monothiol subfamily. As to quaternary structure, homodimer. Interacts with ISCU. Interacts with BOLA1. As to expression, detected in bone, liver, muscle and kidney.

It localises to the mitochondrion matrix. Functionally, monothiol glutaredoxin involved in mitochondrial iron-sulfur (Fe/S) cluster transfer. Receives 2Fe/2S clusters from scaffold protein ISCU and mediates their transfer to apoproteins, to the 4Fe/FS cluster biosynthesis machinery, or export from mitochondrion. Required for normal regulation of hemoglobin synthesis by the iron-sulfur protein ACO1. The chain is Glutaredoxin-related protein 5, mitochondrial (Glrx5) from Mus musculus (Mouse).